The following is a 252-amino-acid chain: Anamorsin homolog (252 aa).

An N-terminal SAM-like domain region spans residues 1–153 (MINFSNTLII…AENPDFNKSD (153 aa)). Residues 153 to 166 (DDDNNLVSSDEEIY) form a linker region. Residues Cys-169, Cys-180, Cys-183, and Cys-185 each coordinate [2Fe-2S] cluster. Residues 169–185 (CEDKKKVVNRVCDNCTC) are fe-S binding site A. [4Fe-4S] cluster contacts are provided by Cys-215, Cys-218, Cys-226, and Cys-229. Short sequence motifs (cx2C motif) lie at residues 215-218 (CGNC) and 226-229 (CGSC). Residues 215-229 (CGNCYLGDAFRCGSC) are fe-S binding site B.

The protein belongs to the anamorsin family. Monomer. The cofactor is [2Fe-2S] cluster. Requires [4Fe-4S] cluster as cofactor.

It is found in the cytoplasm. The protein localises to the mitochondrion intermembrane space. In terms of biological role, component of the cytosolic iron-sulfur (Fe-S) protein assembly (CIA) machinery. Required for the maturation of extramitochondrial Fe-S proteins. Part of an electron transfer chain functioning in an early step of cytosolic Fe-S biogenesis, facilitating the de novo assembly of a [4Fe-4S] cluster on the cytosolic Fe-S scaffold complex. Electrons are transferred from NADPH via a FAD- and FMN-containing diflavin oxidoreductase. Together with the diflavin oxidoreductase, also required for the assembly of the diferric tyrosyl radical cofactor of ribonucleotide reductase (RNR), probably by providing electrons for reduction during radical cofactor maturation in the catalytic small subunit. The polypeptide is Anamorsin homolog (DRE2) (Plasmodium berghei (strain Anka)).